Reading from the N-terminus, the 446-residue chain is Chromosomal replication initiator protein DnaA (446 aa).

Residues 1-72 form a domain I, interacts with DnaA modulators region; sequence MKNISDLWNQ…ADTIYDLTGE (72 aa). The tract at residues 72-109 is domain II; it reads EELSIKFVIPQNQNEEDFMPKSPIKKMSKEEPADFPQN. The segment at 110 to 326 is domain III, AAA+ region; that stretch reads MLNPKYTFDT…GALIRVVAYS (217 aa). Residues Gly154, Gly156, Lys157, and Thr158 each contribute to the ATP site. A domain IV, binds dsDNA region spans residues 327–446; it reads SLINKDINAD…QIKEIKEQLR (120 aa).

This sequence belongs to the DnaA family. Oligomerizes as a right-handed, spiral filament on DNA at oriC.

It localises to the cytoplasm. Its function is as follows. Plays an essential role in the initiation and regulation of chromosomal replication. ATP-DnaA binds to the origin of replication (oriC) to initiate formation of the DNA replication initiation complex once per cell cycle. Binds the DnaA box (a 9 base pair repeat at the origin) and separates the double-stranded (ds)DNA. Forms a right-handed helical filament on oriC DNA; dsDNA binds to the exterior of the filament while single-stranded (ss)DNA is stabiized in the filament's interior. The ATP-DnaA-oriC complex binds and stabilizes one strand of the AT-rich DNA unwinding element (DUE), permitting loading of DNA polymerase. After initiation quickly degrades to an ADP-DnaA complex that is not apt for DNA replication. Binds acidic phospholipids. This chain is Chromosomal replication initiator protein DnaA, found in Bacillus licheniformis (strain ATCC 14580 / DSM 13 / JCM 2505 / CCUG 7422 / NBRC 12200 / NCIMB 9375 / NCTC 10341 / NRRL NRS-1264 / Gibson 46).